The chain runs to 297 residues: UTP--glucose-1-phosphate uridylyltransferase YngB (297 aa).

A signal peptide spans Met-1–Pro-27.

Belongs to the UDPGP type 2 family. In terms of assembly, homodimer.

It catalyses the reaction alpha-D-glucose 1-phosphate + UTP + H(+) = UDP-alpha-D-glucose + diphosphate. Its pathway is glycolipid metabolism; diglucosyl-diacylglycerol biosynthesis. Its function is as follows. Catalyzes the formation of UDP-glucose from glucose-1-phosphate and UTP. This is an intermediate step in the biosynthesis of diglucosyl-diacylglycerol (Glc2-DAG), i.e. the predominant glycolipid found in B.subtilis membrane, which is also used as a membrane anchor for lipoteichoic acid (LTA). YngB contributes to wall teichoic acid (WTA) glucosylation and glycolipid formation under anaerobic fermentative growth conditions. Might also enter other glycosylation pathways, leading to the decorating of other cell envelope components with glucose residues under anaerobic or other growth conditions. In Bacillus subtilis (strain 168), this protein is UTP--glucose-1-phosphate uridylyltransferase YngB (yngB).